The chain runs to 311 residues: tRNA-cytidine(32) 2-sulfurtransferase (311 aa).

Positions 47–52 (SGGKDS) match the PP-loop motif motif. The [4Fe-4S] cluster site is built by cysteine 122, cysteine 125, and cysteine 213.

The protein belongs to the TtcA family. Homodimer. Mg(2+) serves as cofactor. The cofactor is [4Fe-4S] cluster.

The protein localises to the cytoplasm. It catalyses the reaction cytidine(32) in tRNA + S-sulfanyl-L-cysteinyl-[cysteine desulfurase] + AH2 + ATP = 2-thiocytidine(32) in tRNA + L-cysteinyl-[cysteine desulfurase] + A + AMP + diphosphate + H(+). It functions in the pathway tRNA modification. Its function is as follows. Catalyzes the ATP-dependent 2-thiolation of cytidine in position 32 of tRNA, to form 2-thiocytidine (s(2)C32). The sulfur atoms are provided by the cysteine/cysteine desulfurase (IscS) system. This is tRNA-cytidine(32) 2-sulfurtransferase from Salmonella choleraesuis (strain SC-B67).